The primary structure comprises 346 residues: Galactitol 1-phosphate 5-dehydrogenase (346 aa).

The Zn(2+) site is built by Cys38, His59, Cys89, Cys92, Cys95, Cys103, and Glu144.

It belongs to the zinc-containing alcohol dehydrogenase family. It depends on Zn(2+) as a cofactor.

It carries out the reaction galactitol 1-phosphate + NAD(+) = keto-D-tagatose 6-phosphate + NADH + H(+). Functionally, converts galactitol 1-phosphate to tagatose 6-phosphate. The polypeptide is Galactitol 1-phosphate 5-dehydrogenase (gatD) (Escherichia coli O157:H7).